We begin with the raw amino-acid sequence, 408 residues long: PTI1-like tyrosine-protein kinase 3 (408 aa).

Over residues 59 to 76 (SSENEHLRSPKHHNDFGH) the composition is skewed to basic and acidic residues. Residues 59–91 (SSENEHLRSPKHHNDFGHHTRKPQAAVKPDALK) are disordered. A Protein kinase domain is found at 113–395 (FGSKSLIGEG…IVVKALQPLL (283 aa)). ATP-binding positions include 119 to 127 (IGEGSYGRA) and K141. D245 serves as the catalytic Proton acceptor.

The protein belongs to the protein kinase superfamily. Tyr protein kinase family. In terms of assembly, interacts with OXI1. In terms of processing, phosphorylated by OXI1.

The protein localises to the cell membrane. It catalyses the reaction L-tyrosyl-[protein] + ATP = O-phospho-L-tyrosyl-[protein] + ADP + H(+). In Arabidopsis thaliana (Mouse-ear cress), this protein is PTI1-like tyrosine-protein kinase 3 (PTI13).